The following is a 64-amino-acid chain: Large ribosomal subunit protein bL35 (64 aa).

The disordered stretch occupies residues M1–K20.

Belongs to the bacterial ribosomal protein bL35 family.

The chain is Large ribosomal subunit protein bL35 from Corynebacterium urealyticum (strain ATCC 43042 / DSM 7109).